The following is a 347-amino-acid chain: Ribosomal RNA small subunit methyltransferase C (347 aa).

This sequence belongs to the methyltransferase superfamily. RsmC family. Monomer.

It is found in the cytoplasm. The enzyme catalyses guanosine(1207) in 16S rRNA + S-adenosyl-L-methionine = N(2)-methylguanosine(1207) in 16S rRNA + S-adenosyl-L-homocysteine + H(+). Specifically methylates the guanine in position 1207 of 16S rRNA in the 30S particle. The polypeptide is Ribosomal RNA small subunit methyltransferase C (Serratia proteamaculans (strain 568)).